A 364-amino-acid polypeptide reads, in one-letter code: Methylthioribose-1-phosphate isomerase (364 aa).

Substrate-binding positions include 46–48 (RGA), R89, and Q196. The active-site Proton donor is the D237. 247-248 (NK) contacts substrate.

It belongs to the eIF-2B alpha/beta/delta subunits family. MtnA subfamily.

It catalyses the reaction 5-(methylsulfanyl)-alpha-D-ribose 1-phosphate = 5-(methylsulfanyl)-D-ribulose 1-phosphate. It participates in amino-acid biosynthesis; L-methionine biosynthesis via salvage pathway; L-methionine from S-methyl-5-thio-alpha-D-ribose 1-phosphate: step 1/6. Catalyzes the interconversion of methylthioribose-1-phosphate (MTR-1-P) into methylthioribulose-1-phosphate (MTRu-1-P). This is Methylthioribose-1-phosphate isomerase from Pelotomaculum thermopropionicum (strain DSM 13744 / JCM 10971 / SI).